The chain runs to 265 residues: Palmitoyltransferase ZDHHC21 (265 aa).

Topologically, residues 1 to 16 (MGLRIHFVVDPHGWCC) are cytoplasmic. The helical transmembrane segment at 17–37 (MGLIVFVWLYNFFLIPKIVLF) threads the bilayer. Topologically, residues 38–44 (PHYEEGH) are extracellular. The chain crosses the membrane as a helical span at residues 45–65 (IPGILIIIFYGIAMFCLVALV). The Cytoplasmic portion of the chain corresponds to 66-133 (RASITDPGRL…NNCVGEDNHW (68 aa)). The region spanning 90–140 (ELCNKCNLMRPKRSHHCSRCGHCVRRMDHHCPWINNCVGEDNHWLFLQLCF) is the DHHC domain. Residue Cys-120 is the S-palmitoyl cysteine intermediate of the active site. A helical transmembrane segment spans residues 134-154 (LFLQLCFYTELLTCYALMFSF). Over 155–185 (CHYYYFLPLKKRNLDLFVVRHELAIMRLAAF) the chain is Extracellular. The helical transmembrane segment at 186–206 (MGITMLVGITGLFYTQLIGII) threads the bilayer. Over 207-265 (TDTTSIEKMSNCCEEISRPRKPWQQTFSEVFGTRWKILWFIPFRRRQPLRVPYHFANHV) the chain is Cytoplasmic.

The protein belongs to the DHHC palmitoyltransferase family.

It is found in the golgi apparatus membrane. The protein localises to the golgi apparatus. The protein resides in the cis-Golgi network membrane. It localises to the cell membrane. It catalyses the reaction L-cysteinyl-[protein] + hexadecanoyl-CoA = S-hexadecanoyl-L-cysteinyl-[protein] + CoA. In terms of biological role, palmitoyltransferase that catalyzes the addition of palmitate onto various protein substrates. Palmitoylates sex steroid hormone receptors, including ESR1, PGR and AR, thereby regulating their targeting to the plasma membrane. This affects rapid intracellular signaling by sex hormones via ERK and AKT kinases and the generation of cAMP, but does not affect that mediated by their nuclear receptor. Palmitoylates FYN, regulates its localization in hair follicles and plays a key role in epidermal homeostasis and hair follicle differentiation. Through the palmitoylation of PLCB1 and the regulation of PLCB1 downstream signaling may indirectly regulate the function of the endothelial barrier and the adhesion of leukocytes to the endothelium. Also has a palmitoyltransferase activity toward ADRA1D, positively regulating its activity and expression and may thereby play a role in vascular contraction. May also palmitoylate eNOS and LCK. This is Palmitoyltransferase ZDHHC21 from Bos taurus (Bovine).